Here is a 565-residue protein sequence, read N- to C-terminus: CTP synthase (565 aa).

The interval 1-272 (MARPKNVKHI…DKRVLKKLGI (272 aa)) is amidoligase domain. Serine 18 provides a ligand contact to CTP. Serine 18 lines the UTP pocket. 19-24 (SLGKGI) provides a ligand contact to ATP. Tyrosine 59 is an L-glutamine binding site. Position 76 (aspartate 76) interacts with ATP. Residues aspartate 76 and glutamate 146 each contribute to the Mg(2+) site. CTP contacts are provided by residues 153 to 155 (DIE), 193 to 198 (KTKPTQ), and lysine 229. Residues 193–198 (KTKPTQ) and lysine 229 contribute to the UTP site. The Glutamine amidotransferase type-1 domain occupies 299-543 (TIAVCGKYTE…VAAAKAFAFG (245 aa)). Glycine 363 is a binding site for L-glutamine. The active-site Nucleophile; for glutamine hydrolysis is cysteine 390. L-glutamine contacts are provided by residues 391 to 394 (LGMQ), glutamate 414, and arginine 471. Residues histidine 516 and glutamate 518 contribute to the active site.

The protein belongs to the CTP synthase family. Homotetramer.

It carries out the reaction UTP + L-glutamine + ATP + H2O = CTP + L-glutamate + ADP + phosphate + 2 H(+). The catalysed reaction is L-glutamine + H2O = L-glutamate + NH4(+). It catalyses the reaction UTP + NH4(+) + ATP = CTP + ADP + phosphate + 2 H(+). The protein operates within pyrimidine metabolism; CTP biosynthesis via de novo pathway; CTP from UDP: step 2/2. Its activity is regulated as follows. Allosterically activated by GTP, when glutamine is the substrate; GTP has no effect on the reaction when ammonia is the substrate. The allosteric effector GTP functions by stabilizing the protein conformation that binds the tetrahedral intermediate(s) formed during glutamine hydrolysis. Inhibited by the product CTP, via allosteric rather than competitive inhibition. Functionally, catalyzes the ATP-dependent amination of UTP to CTP with either L-glutamine or ammonia as the source of nitrogen. Regulates intracellular CTP levels through interactions with the four ribonucleotide triphosphates. The sequence is that of CTP synthase from Chlorobium phaeobacteroides (strain BS1).